Consider the following 159-residue polypeptide: Major latex protein 149 (159 aa).

The protein belongs to the MLP family. As to expression, laticifer.

It localises to the vacuole. It is found in the cytoplasmic vesicle. Not known; MLPs constitute up to 50% of the soluble latex protein. The protein is Major latex protein 149 (MLP149) of Papaver somniferum (Opium poppy).